A 190-amino-acid polypeptide reads, in one-letter code: MKKHVTEEQKTSAAPEAEQASPESSAAEAATPEERISRLEEQLAAKEAECRENWDRFVRERADLENFRKRSNREKEELLNYGTKSLLEEILPVVDNLERALSHANENGSTGLTEGVQMIHGLLLNAMKKFGVTPLETSGAPFDPSFHQAMTQIPTDEHPPNTVVEEFQKGYLLKERLLRPAMVSVATAPK.

The segment covering 1–10 (MKKHVTEEQK) has biased composition (basic and acidic residues). The tract at residues 1-42 (MKKHVTEEQKTSAAPEAEQASPESSAAEAATPEERISRLEEQ) is disordered. Positions 12-30 (SAAPEAEQASPESSAAEAA) are enriched in low complexity. The span at 32–42 (PEERISRLEEQ) shows a compositional bias: basic and acidic residues.

This sequence belongs to the GrpE family. Homodimer.

The protein resides in the cytoplasm. Its function is as follows. Participates actively in the response to hyperosmotic and heat shock by preventing the aggregation of stress-denatured proteins, in association with DnaK and GrpE. It is the nucleotide exchange factor for DnaK and may function as a thermosensor. Unfolded proteins bind initially to DnaJ; upon interaction with the DnaJ-bound protein, DnaK hydrolyzes its bound ATP, resulting in the formation of a stable complex. GrpE releases ADP from DnaK; ATP binding to DnaK triggers the release of the substrate protein, thus completing the reaction cycle. Several rounds of ATP-dependent interactions between DnaJ, DnaK and GrpE are required for fully efficient folding. This chain is Protein GrpE, found in Pelobacter propionicus (strain DSM 2379 / NBRC 103807 / OttBd1).